Reading from the N-terminus, the 367-residue chain is Flagellar P-ring protein (367 aa).

The signal sequence occupies residues 1 to 22 (MRRMLVIRWILAIHLIATQVFA).

This sequence belongs to the FlgI family. The basal body constitutes a major portion of the flagellar organelle and consists of four rings (L,P,S, and M) mounted on a central rod.

Its subcellular location is the periplasm. The protein resides in the bacterial flagellum basal body. Its function is as follows. Assembles around the rod to form the L-ring and probably protects the motor/basal body from shearing forces during rotation. This is Flagellar P-ring protein from Legionella pneumophila (strain Lens).